We begin with the raw amino-acid sequence, 254 residues long: Leucyl/phenylalanyl-tRNA--protein transferase (254 aa).

The protein belongs to the L/F-transferase family.

It localises to the cytoplasm. The catalysed reaction is N-terminal L-lysyl-[protein] + L-leucyl-tRNA(Leu) = N-terminal L-leucyl-L-lysyl-[protein] + tRNA(Leu) + H(+). It carries out the reaction N-terminal L-arginyl-[protein] + L-leucyl-tRNA(Leu) = N-terminal L-leucyl-L-arginyl-[protein] + tRNA(Leu) + H(+). The enzyme catalyses L-phenylalanyl-tRNA(Phe) + an N-terminal L-alpha-aminoacyl-[protein] = an N-terminal L-phenylalanyl-L-alpha-aminoacyl-[protein] + tRNA(Phe). Its function is as follows. Functions in the N-end rule pathway of protein degradation where it conjugates Leu, Phe and, less efficiently, Met from aminoacyl-tRNAs to the N-termini of proteins containing an N-terminal arginine or lysine. This is Leucyl/phenylalanyl-tRNA--protein transferase from Burkholderia orbicola (strain MC0-3).